Reading from the N-terminus, the 107-residue chain is Prostate collagen triple helix protein (107 aa).

A disordered region spans residues 47-107; it reads PLIPRTPGSP…PTSPLFPFCP (61 aa). Residues 81–100 show a composition bias toward low complexity; it reads VGPKGPMLPLGPSGPVGPTS.

As to expression, expressed in prostate and testis. Weakly or not expressed in other tissues. Overexpressed in prostate cancers.

The protein localises to the cytoplasm. In terms of biological role, may be involved in growth and survival of prostate cancer cells through the TAF-Ibeta pathway. The protein is Prostate collagen triple helix protein (PCOTH) of Homo sapiens (Human).